Reading from the N-terminus, the 517-residue chain is Crotonobetaine/carnitine--CoA ligase (517 aa).

It belongs to the ATP-dependent AMP-binding enzyme family.

It carries out the reaction 4-(trimethylamino)butanoate + ATP + CoA = 4-(trimethylamino)butanoyl-CoA + AMP + diphosphate. The catalysed reaction is crotonobetaine + ATP + CoA = crotonobetainyl-CoA + AMP + diphosphate. The enzyme catalyses (R)-carnitine + ATP + CoA = (R)-carnitinyl-CoA + AMP + diphosphate. The protein operates within amine and polyamine metabolism; carnitine metabolism. In terms of biological role, catalyzes the transfer of CoA to carnitine, generating the initial carnitinyl-CoA needed for the CaiB reaction cycle. Also has activity toward crotonobetaine and gamma-butyrobetaine. The chain is Crotonobetaine/carnitine--CoA ligase from Salmonella enteritidis PT4 (strain P125109).